The chain runs to 347 residues: Fused nickel transport protein NikMN (347 aa).

9 helical membrane-spanning segments follow: residues 6–26, 40–60, 73–93, 96–116, 140–160, 185–205, 236–256, 273–293, and 319–339; these read GYLSPVTCAVTFAATVPFWYV, LPLVALVAAFSFVIMMFNLPI, IAAVLLGPWAAVPAISVALLI, IFFGDGGITAFGANCLNMAVV, VIMAGLASYAGLNAAALLAAV, VAVPAMALTHLTIAGAAEFIV, LWAGIGALVVLCPLGLIAAGT, AAMAGASGGVAPPAGLPGGFA, and VLSALLGVALIVAGIGLSAGL.

This sequence belongs to the CbiM family. NikM subfamily. As to quaternary structure, forms an energy-coupling factor (ECF) transporter complex composed of an ATP-binding protein (A component, NikO), a transmembrane protein (T component, NikQ) and a fused possible substrate-capture protein (S component, NikMN) of unknown stoichimetry.

It localises to the cell inner membrane. In terms of biological role, part of the energy-coupling factor (ECF) transporter complex NikMNQO involved in nickel import. The complex confers nickel uptake upon expression in E.coli; can also transport cobalt with a very low affinity. This is Fused nickel transport protein NikMN (nikMN) from Rhodobacter capsulatus (strain ATCC BAA-309 / NBRC 16581 / SB1003).